The chain runs to 611 residues: Glutamine--fructose-6-phosphate aminotransferase [isomerizing] (611 aa).

Cysteine 2 acts as the Nucleophile; for GATase activity in catalysis. The Glutamine amidotransferase type-2 domain maps to 2 to 219; it reads CGIVGGVSKT…DGDVAMLQRQ (218 aa). SIS domains follow at residues 287–427 and 460–601; these read AAAM…APGA and WAAR…VDRP. The For Fru-6P isomerization activity role is filled by lysine 606.

As to quaternary structure, homodimer.

Its subcellular location is the cytoplasm. It carries out the reaction D-fructose 6-phosphate + L-glutamine = D-glucosamine 6-phosphate + L-glutamate. Functionally, catalyzes the first step in hexosamine metabolism, converting fructose-6P into glucosamine-6P using glutamine as a nitrogen source. This Acidithiobacillus ferridurans protein is Glutamine--fructose-6-phosphate aminotransferase [isomerizing].